The following is a 561-amino-acid chain: 2-succinyl-5-enolpyruvyl-6-hydroxy-3-cyclohexene-1-carboxylate synthase (561 aa).

The protein belongs to the TPP enzyme family. MenD subfamily. Homodimer. Mg(2+) is required as a cofactor. Mn(2+) serves as cofactor. The cofactor is thiamine diphosphate.

The catalysed reaction is isochorismate + 2-oxoglutarate + H(+) = 5-enolpyruvoyl-6-hydroxy-2-succinyl-cyclohex-3-ene-1-carboxylate + CO2. It participates in quinol/quinone metabolism; 1,4-dihydroxy-2-naphthoate biosynthesis; 1,4-dihydroxy-2-naphthoate from chorismate: step 2/7. It functions in the pathway quinol/quinone metabolism; menaquinone biosynthesis. In terms of biological role, catalyzes the thiamine diphosphate-dependent decarboxylation of 2-oxoglutarate and the subsequent addition of the resulting succinic semialdehyde-thiamine pyrophosphate anion to isochorismate to yield 2-succinyl-5-enolpyruvyl-6-hydroxy-3-cyclohexene-1-carboxylate (SEPHCHC). This is 2-succinyl-5-enolpyruvyl-6-hydroxy-3-cyclohexene-1-carboxylate synthase from Proteus mirabilis (strain HI4320).